The sequence spans 210 residues: Protein GET1 (210 aa).

At 1–4 (MASL) the chain is on the lumenal side. The chain crosses the membrane as a helical span at residues 5–24 (LIIVFLSHVVTYLINTIGAT). Residues 25 to 110 (TVDNLLWLLY…SFDLTVKSVR (86 aa)) lie on the Cytoplasmic side of the membrane. Positions 43–97 (RTAVEQRRLKGEVVQLKREMKSTSSQDEFAKWAKLRRRHDKAMEEYEAKNKALGK) form a coiled coil. A helical transmembrane segment spans residues 111 to 131 (FFSTTGLKFFLQFWYSKTPMF). The Lumenal portion of the chain corresponds to 132 to 155 (ELPRGWVPWQVEWVLSFPRAPLGT). Residues 156–172 (VSIQVWSGVCTTVVSLA) form a helical membrane-spanning segment. At 173 to 210 (GDALGVVIQSLILKMTKRGVARTSEGRPSQPMALKKEL) the chain is on the cytoplasmic side.

This sequence belongs to the WRB/GET1 family. As to quaternary structure, interacts with GET3.

Its subcellular location is the endoplasmic reticulum membrane. Its function is as follows. Required for the post-translational delivery of tail-anchored (TA) proteins to the endoplasmic reticulum. Acts as a membrane receptor for soluble GET3, which recognizes and selectively binds the transmembrane domain of TA proteins in the cytosol. The sequence is that of Protein GET1 from Uncinocarpus reesii (strain UAMH 1704).